Reading from the N-terminus, the 411-residue chain is Imidazolonepropionase (411 aa).

Residues histidine 78 and histidine 80 each coordinate Fe(3+). Zn(2+) contacts are provided by histidine 78 and histidine 80. Residues arginine 87, tyrosine 150, and histidine 183 each coordinate 4-imidazolone-5-propanoate. Tyrosine 150 provides a ligand contact to N-formimidoyl-L-glutamate. Residue histidine 248 participates in Fe(3+) binding. Residue histidine 248 participates in Zn(2+) binding. Glutamine 251 lines the 4-imidazolone-5-propanoate pocket. Residue aspartate 322 participates in Fe(3+) binding. Zn(2+) is bound at residue aspartate 322. Residues asparagine 324 and glycine 326 each contribute to the N-formimidoyl-L-glutamate site. Threonine 327 serves as a coordination point for 4-imidazolone-5-propanoate.

Belongs to the metallo-dependent hydrolases superfamily. HutI family. Zn(2+) serves as cofactor. Fe(3+) is required as a cofactor.

It localises to the cytoplasm. The enzyme catalyses 4-imidazolone-5-propanoate + H2O = N-formimidoyl-L-glutamate. It participates in amino-acid degradation; L-histidine degradation into L-glutamate; N-formimidoyl-L-glutamate from L-histidine: step 3/3. Its function is as follows. Catalyzes the hydrolytic cleavage of the carbon-nitrogen bond in imidazolone-5-propanoate to yield N-formimidoyl-L-glutamate. It is the third step in the universal histidine degradation pathway. The sequence is that of Imidazolonepropionase from Flavobacterium psychrophilum (strain ATCC 49511 / DSM 21280 / CIP 103535 / JIP02/86).